Here is a 429-residue protein sequence, read N- to C-terminus: Glutamate-1-semialdehyde 2,1-aminomutase (429 aa).

Lys267 is subject to N6-(pyridoxal phosphate)lysine.

It belongs to the class-III pyridoxal-phosphate-dependent aminotransferase family. HemL subfamily. In terms of assembly, homodimer. Requires pyridoxal 5'-phosphate as cofactor.

It localises to the cytoplasm. It carries out the reaction (S)-4-amino-5-oxopentanoate = 5-aminolevulinate. It functions in the pathway porphyrin-containing compound metabolism; protoporphyrin-IX biosynthesis; 5-aminolevulinate from L-glutamyl-tRNA(Glu): step 2/2. The chain is Glutamate-1-semialdehyde 2,1-aminomutase from Stenotrophomonas maltophilia (strain R551-3).